A 243-amino-acid chain; its full sequence is tRNA pseudouridine synthase A (243 aa).

The Nucleophile role is filled by Asp54. Tyr112 provides a ligand contact to substrate.

This sequence belongs to the tRNA pseudouridine synthase TruA family. In terms of assembly, homodimer.

It catalyses the reaction uridine(38/39/40) in tRNA = pseudouridine(38/39/40) in tRNA. Formation of pseudouridine at positions 38, 39 and 40 in the anticodon stem and loop of transfer RNAs. The chain is tRNA pseudouridine synthase A from Aster yellows witches'-broom phytoplasma (strain AYWB).